The chain runs to 237 residues: MSTLHDLNGATIAFDLDGTLVDTAPDLVGALNIILAQESLPPLPFDDVRLMVGRGARALLERGFAAAGAPLDAEQAPALVQRFIDVYLARIADESAPFPGVVEVLSDLKTAGAKLVVCTNKLTNLSTALLDAVALSPFFEAVIGADLAPAAKPDGRHVAAAVAAVGGDVSRAVMIGDSVNDALGARNAGVPGVLVSFGYTEEPVETLGADLVIHSFLDVPKACITLLTSCPAPNTGL.

Aspartate 15 (nucleophile) is an active-site residue. Mg(2+)-binding residues include aspartate 15, aspartate 17, and aspartate 177.

This sequence belongs to the HAD-like hydrolase superfamily. CbbY/CbbZ/Gph/YieH family. Mg(2+) is required as a cofactor.

The enzyme catalyses 2-phosphoglycolate + H2O = glycolate + phosphate. The protein operates within organic acid metabolism; glycolate biosynthesis; glycolate from 2-phosphoglycolate: step 1/1. Its function is as follows. Specifically catalyzes the dephosphorylation of 2-phosphoglycolate. Is involved in the dissimilation of the intracellular 2-phosphoglycolate formed during the DNA repair of 3'-phosphoglycolate ends, a major class of DNA lesions induced by oxidative stress. The chain is Phosphoglycolate phosphatase from Caulobacter vibrioides (strain ATCC 19089 / CIP 103742 / CB 15) (Caulobacter crescentus).